Consider the following 103-residue polypeptide: N(4)-acetylcytidine amidohydrolase (103 aa).

The ASCH domain occupies 6 to 101; the sequence is ITFFQRFQDD…QTQFYVIEFK (96 aa). Lys-21 acts as the Proton acceptor in catalysis. Thr-24 functions as the Nucleophile in the catalytic mechanism. Glu-74 (proton donor) is an active-site residue.

Belongs to the N(4)-acetylcytidine amidohydrolase family.

It catalyses the reaction N(4)-acetylcytidine + H2O = cytidine + acetate + H(+). It carries out the reaction N(4)-acetyl-2'-deoxycytidine + H2O = 2'-deoxycytidine + acetate + H(+). The catalysed reaction is N(4)-acetylcytosine + H2O = cytosine + acetate + H(+). Catalyzes the hydrolysis of N(4)-acetylcytidine (ac4C). This Escherichia coli O81 (strain ED1a) protein is N(4)-acetylcytidine amidohydrolase (yqfB).